A 217-amino-acid polypeptide reads, in one-letter code: Thiamine-phosphate synthase (217 aa).

4-amino-2-methyl-5-(diphosphooxymethyl)pyrimidine-binding positions include 41–45 and asparagine 76; that span reads QYRDK. Aspartate 77 and aspartate 96 together coordinate Mg(2+). Serine 115 lines the 4-amino-2-methyl-5-(diphosphooxymethyl)pyrimidine pocket. A 2-[(2R,5Z)-2-carboxy-4-methylthiazol-5(2H)-ylidene]ethyl phosphate-binding site is contributed by 142–144; the sequence is SPS. Lysine 145 is a binding site for 4-amino-2-methyl-5-(diphosphooxymethyl)pyrimidine. Residues glycine 172 and 192 to 193 contribute to the 2-[(2R,5Z)-2-carboxy-4-methylthiazol-5(2H)-ylidene]ethyl phosphate site; that span reads IS.

It belongs to the thiamine-phosphate synthase family. The cofactor is Mg(2+).

It carries out the reaction 2-[(2R,5Z)-2-carboxy-4-methylthiazol-5(2H)-ylidene]ethyl phosphate + 4-amino-2-methyl-5-(diphosphooxymethyl)pyrimidine + 2 H(+) = thiamine phosphate + CO2 + diphosphate. It catalyses the reaction 2-(2-carboxy-4-methylthiazol-5-yl)ethyl phosphate + 4-amino-2-methyl-5-(diphosphooxymethyl)pyrimidine + 2 H(+) = thiamine phosphate + CO2 + diphosphate. The enzyme catalyses 4-methyl-5-(2-phosphooxyethyl)-thiazole + 4-amino-2-methyl-5-(diphosphooxymethyl)pyrimidine + H(+) = thiamine phosphate + diphosphate. The protein operates within cofactor biosynthesis; thiamine diphosphate biosynthesis; thiamine phosphate from 4-amino-2-methyl-5-diphosphomethylpyrimidine and 4-methyl-5-(2-phosphoethyl)-thiazole: step 1/1. Condenses 4-methyl-5-(beta-hydroxyethyl)thiazole monophosphate (THZ-P) and 2-methyl-4-amino-5-hydroxymethyl pyrimidine pyrophosphate (HMP-PP) to form thiamine monophosphate (TMP). The polypeptide is Thiamine-phosphate synthase (Acidithiobacillus ferrooxidans (strain ATCC 23270 / DSM 14882 / CIP 104768 / NCIMB 8455) (Ferrobacillus ferrooxidans (strain ATCC 23270))).